The sequence spans 560 residues: Glucose-6-phosphate isomerase, cytosolic (560 aa).

N-acetylalanine is present on alanine 2. The active-site Proton donor is the glutamate 361. Residues histidine 392 and lysine 517 contribute to the active site.

The protein belongs to the GPI family. In terms of assembly, homodimer.

It localises to the cytoplasm. It catalyses the reaction alpha-D-glucose 6-phosphate = beta-D-fructose 6-phosphate. It participates in carbohydrate degradation; glycolysis; D-glyceraldehyde 3-phosphate and glycerone phosphate from D-glucose: step 2/4. With respect to regulation, inhibited by glycerol-3-P (G3P). The protein is Glucose-6-phosphate isomerase, cytosolic (PGIC) of Arabidopsis thaliana (Mouse-ear cress).